We begin with the raw amino-acid sequence, 265 residues long: MNCYPAGHLLGKGHVQLNESGENAELISQEQIGDDLNGWHRDAFEDIASRLTDPGFPCVFSRNAFRKKLVKFVFVEGSGKEDIRHLGAGLKDYVELSRDWDGALDTAYPLVVVFSADAVTADSVEQYHAFGWWVLQELHAIDPTPWPEGVDKGPQSEAWSMCFHGMPLFINMSSPAHQVRRSRNLGRHFALVINPRERFDVFAGDTPSGRKVRSNIRGRIARYDGTPHAQQLGSYGTGALEWMQYGLVEENRERADVCPFTFRGA.

The protein belongs to the DcsA family. Requires heme as cofactor.

Involved in the biosynthesis of the antibiotic D-cycloserine (DCS), a cyclic structural analog of D-alanine, used as an antitubercular agent. Could catalyze the production of N(omega)-hydroxy-L-arginine (NHA) from L-arginine. In Streptomyces lavendulae, this protein is Putative N(omega)-hydroxy-L-arginine synthase DcsA.